Consider the following 239-residue polypeptide: Probable transcriptional regulatory protein BCAH187_A0615 (239 aa).

Belongs to the TACO1 family. YeeN subfamily.

Its subcellular location is the cytoplasm. In Bacillus cereus (strain AH187), this protein is Probable transcriptional regulatory protein BCAH187_A0615.